The following is a 146-amino-acid chain: Large ribosomal subunit protein uL15 (146 aa).

A compositionally biased stretch (basic and acidic residues) spans Met1–Arg13. The segment at Met1–Gly65 is disordered. Composition is skewed to gly residues over residues Arg21–Ala31 and Ser42–Gly52.

It belongs to the universal ribosomal protein uL15 family. In terms of assembly, part of the 50S ribosomal subunit.

In terms of biological role, binds to the 23S rRNA. This is Large ribosomal subunit protein uL15 from Halalkalibacterium halodurans (strain ATCC BAA-125 / DSM 18197 / FERM 7344 / JCM 9153 / C-125) (Bacillus halodurans).